A 530-amino-acid polypeptide reads, in one-letter code: Calcium uptake protein 3, mitochondrial (530 aa).

The N-terminal 43 residues, 1–43 (MAALRRLLWPPPRVSPPLCAHQPLLGPWGRPAVTTLGLPGRPF), are a transit peptide targeting the mitochondrion. Residues 92–115 (GSPATGRPSKSAATEPEDPPRGRG) form a disordered region. Residues 232-267 (KPHAGFRIAFNMFDTDGNEMVDKKEFLVLQEIFRKK) enclose the EF-hand 1 domain. 6 residues coordinate Ca(2+): aspartate 245, aspartate 247, asparagine 249, methionine 251, aspartate 253, and glutamate 256. Residues 401–436 (VENTSVFLENVRYSIPEEKGITFDEFRSFFQFLNNL) enclose the EF-hand 2; degenerate domain. An EF-hand 3 domain is found at 470 to 505 (FSPHLVNTVFKIFDVDKDDQLSYKEFIGIMKDRLHR). 5 residues coordinate Ca(2+): aspartate 483, aspartate 485, aspartate 487, glutamine 489, and glutamate 494.

This sequence belongs to the MICU1 family. MICU3 subfamily. As to quaternary structure, heterodimer; disulfide-linked; heterodimerizes with MICU1. Component of the uniplex complex, composed of MCU, EMRE/SMDT1, MICU1 and MICU3 in a 4:4:1:1 stoichiometry. Specifically expressed in the central nervous system and skeletal muscle.

Its subcellular location is the mitochondrion intermembrane space. The protein resides in the mitochondrion inner membrane. In terms of biological role, tissue-specific calcium sensor of the mitochondrial calcium uniporter (MCU) channel, which specifically regulates MCU channel activity in the central nervous system and skeletal muscle. Senses calcium level via its EF-hand domains: compared to MICU1 and MICU2, MICU3 has a higher affinity for calcium. MICU1 and MICU3 form a disulfide-linked heterodimer that stimulates and inhibits MCU activity, depending on the concentration of calcium. At low calcium levels, MICU1 occludes the pore of the MCU channel, preventing mitochondrial calcium uptake. At higher calcium levels, calcium-binding to MICU1 and MICU3 induces a conformational change that weakens MCU-MICU1 interactions and moves the MICU1-MICU3 heterodimer away from the pore, allowing calcium permeation through the MCU channel. The high calcium affinity of MICU3 lowers the calcium threshold necessary for calcium permeation through the MCU channel. The MICU1-MICU3 heterodimer promotes flexibility of neurotransmission in neuronal cells by enhancing mitochondrial calcium uptake in presynapses. It is also required to increase mitochondrial calcium uptake in skeletal muscle cells, thereby increasing ATP production. The protein is Calcium uptake protein 3, mitochondrial of Homo sapiens (Human).